A 632-amino-acid chain; its full sequence is Cytoplasmic polyadenylation element-binding protein 3 (632 aa).

Basic and acidic residues predominate over residues 1–11 (MQDDLLMDKSK). Disordered stretches follow at residues 1 to 89 (MQDD…TGGS) and 127 to 212 (FSPQ…RRAV). Low complexity predominate over residues 13–48 (QQRQQPQQPPSSQTQQQQKEAASVAEPPSSRESSPP). Polar residues-rich tracts occupy residues 65-89 (SFQQ…TGGS) and 135-169 (HQTQ…LTNK). Low complexity predominate over residues 170–193 (PSSSPNSSSPSPSNWNNQQNAAWN). 2 consecutive RRM domains span residues 375–466 (RKVF…PWNL) and 483–565 (KTIF…PYVL).

It belongs to the RRM CPEB family. As to quaternary structure, following synaptic activity, forms amyloid-like oligomers. Aggregation requires an intact actin cytoskeleton. In terms of tissue distribution, in embryos, expressed in the central nervous system, and intermediate and distal pronephric tubule segments of the embryonic kidney.

The protein resides in the cytoplasm. It is found in the nucleus. Its subcellular location is the synapse. It localises to the cell projection. The protein localises to the dendrite. The protein resides in the postsynaptic density. Sequence-specific RNA-binding protein which acts as a translational repressor in the basal unstimulated state but, following neuronal stimulation, acts as a translational activator. Does not bind to the cytoplasmic polyadenylation element (CPE), a uridine-rich sequence element within the mRNA 3'-UTR, but binds to a U-rich loop within a stem-loop structure. Required for the consolidation and maintenance of hippocampal-based long term memory. Inhibits differentiation of intermediate mesoderm from an early stage to inhibit pronephric differentiation but induce neural differentiation. In Xenopus tropicalis (Western clawed frog), this protein is Cytoplasmic polyadenylation element-binding protein 3 (cpeb3).